Here is a 381-residue protein sequence, read N- to C-terminus: 3-isopropylmalate dehydrogenase (381 aa).

Substrate-binding residues include R104, R114, R142, and D232. Positions 232, 256, and 260 each coordinate Mg(2+). 290-302 (GSAPDIAGQDKAN) lines the NAD(+) pocket.

This sequence belongs to the isocitrate and isopropylmalate dehydrogenases family. LeuB type 1 subfamily. In terms of assembly, homodimer. It depends on Mg(2+) as a cofactor. Requires Mn(2+) as cofactor.

The protein resides in the cytoplasm. The enzyme catalyses (2R,3S)-3-isopropylmalate + NAD(+) = 4-methyl-2-oxopentanoate + CO2 + NADH. It functions in the pathway amino-acid biosynthesis; L-leucine biosynthesis; L-leucine from 3-methyl-2-oxobutanoate: step 3/4. Functionally, catalyzes the oxidation of 3-carboxy-2-hydroxy-4-methylpentanoate (3-isopropylmalate) to 3-carboxy-4-methyl-2-oxopentanoate. The product decarboxylates to 4-methyl-2 oxopentanoate. This is 3-isopropylmalate dehydrogenase from Synechococcus sp. (strain JA-3-3Ab) (Cyanobacteria bacterium Yellowstone A-Prime).